The chain runs to 448 residues: Methylenetetrahydrofolate--tRNA-(uracil-5-)-methyltransferase TrmFO (448 aa).

13 to 18 is a binding site for FAD; sequence GAGLAG.

This sequence belongs to the MnmG family. TrmFO subfamily. It depends on FAD as a cofactor.

Its subcellular location is the cytoplasm. It catalyses the reaction uridine(54) in tRNA + (6R)-5,10-methylene-5,6,7,8-tetrahydrofolate + NADH + H(+) = 5-methyluridine(54) in tRNA + (6S)-5,6,7,8-tetrahydrofolate + NAD(+). The enzyme catalyses uridine(54) in tRNA + (6R)-5,10-methylene-5,6,7,8-tetrahydrofolate + NADPH + H(+) = 5-methyluridine(54) in tRNA + (6S)-5,6,7,8-tetrahydrofolate + NADP(+). Functionally, catalyzes the folate-dependent formation of 5-methyl-uridine at position 54 (M-5-U54) in all tRNAs. The chain is Methylenetetrahydrofolate--tRNA-(uracil-5-)-methyltransferase TrmFO from Streptococcus pyogenes serotype M12 (strain MGAS2096).